Here is a 194-residue protein sequence, read N- to C-terminus: Fibroblast growth factor 7 (194 aa).

The signal sequence occupies residues 1–31; it reads MRKWILTWILPSLLHRSCFHIICLVGTLSLD. Asparagine 45 is a glycosylation site (N-linked (GlcNAc...) asparagine).

The protein belongs to the heparin-binding growth factors family. Interacts with FGFBP1. Interacts with FGFR2. Affinity between fibroblast growth factors (FGFs) and their receptors is increased by heparan sulfate glycosaminoglycans that function as coreceptors.

It is found in the secreted. Its function is as follows. Plays an important role in the regulation of embryonic development, cell proliferation and cell differentiation. Required for normal branching morphogenesis. Growth factor active on keratinocytes. Possible major paracrine effector of normal epithelial cell proliferation. In Sus scrofa (Pig), this protein is Fibroblast growth factor 7 (FGF7).